Here is a 723-residue protein sequence, read N- to C-terminus: Probable cadmium-transporting ATPase (723 aa).

Positions 12–75 constitute an HMA domain; the sequence is EMKAYRVQGF…AGAFENLKVT (64 aa). C23 and C26 together coordinate Cd(2+). 5 helical membrane passes run 103–123, 127–147, 168–188, 329–349, and 361–381; these read STLLYASLLIAFGYLSSYVNG, IVTTLLFLASMFIGGLSLFKV, IGGAIIGEWAEVAIVVILFAI, YYTPIIMIIAALVAIVPPLFF, and LAVLVVGCPCALVISTPISIV. D412 functions as the 4-aspartylphosphate intermediate in the catalytic mechanism. 2 helical membrane-spanning segments follow: residues 671–690 and 694–716; these read IIKANITFAIAIKFIALLLV and WLTLWIAILSDMGATLLVALNGL.

The protein belongs to the cation transport ATPase (P-type) (TC 3.A.3) family. Type IB subfamily.

It is found in the cell membrane. The catalysed reaction is Cd(2+)(in) + ATP + H2O = Cd(2+)(out) + ADP + phosphate + H(+). Its function is as follows. Couples the hydrolysis of ATP with the export of cadmium. This Alkalihalophilus pseudofirmus (strain ATCC BAA-2126 / JCM 17055 / OF4) (Bacillus pseudofirmus) protein is Probable cadmium-transporting ATPase (cadA).